The sequence spans 324 residues: NADH-ubiquinone oxidoreductase chain 1 (324 aa).

9 helical membrane passes run 9–29 (LINPLAYIIPILLATAFLTLI), 43–63 (PNIVGPYGLLQPIADGLKLFI), 77–97 (FLATPTVALALALLMWMPLPL), 106–126 (LGLLFILAISSLTVYTILGSG), 146–166 (ISYEVSLGLILLSMIIFAGGF), 177–197 (TIWLLIPGWPLAFMWYISTLA), 228–248 (LFFLAEYTNILLMNTLSVILF), 259–279 (QISSLSLMMKASMLTVLFLWI), and 299–319 (FLPLTLAIILWHMALPLATTS).

It belongs to the complex I subunit 1 family.

The protein localises to the mitochondrion inner membrane. It carries out the reaction a ubiquinone + NADH + 5 H(+)(in) = a ubiquinol + NAD(+) + 4 H(+)(out). Its function is as follows. Core subunit of the mitochondrial membrane respiratory chain NADH dehydrogenase (Complex I) that is believed to belong to the minimal assembly required for catalysis. Complex I functions in the transfer of electrons from NADH to the respiratory chain. The immediate electron acceptor for the enzyme is believed to be ubiquinone. The sequence is that of NADH-ubiquinone oxidoreductase chain 1 (MT-ND1) from Scyliorhinus canicula (Small-spotted catshark).